A 370-amino-acid polypeptide reads, in one-letter code: Glutamate 5-kinase (370 aa).

Lys11 lines the ATP pocket. Positions 52, 139, and 151 each coordinate substrate. ATP-binding positions include 171–172 (TD) and 213–219 (TGGMATK). In terms of domain architecture, PUA spans 278 to 356 (TGKLLLDAGA…DQIVQILGYE (79 aa)).

The protein belongs to the glutamate 5-kinase family.

Its subcellular location is the cytoplasm. The enzyme catalyses L-glutamate + ATP = L-glutamyl 5-phosphate + ADP. The protein operates within amino-acid biosynthesis; L-proline biosynthesis; L-glutamate 5-semialdehyde from L-glutamate: step 1/2. Its function is as follows. Catalyzes the transfer of a phosphate group to glutamate to form L-glutamate 5-phosphate. This Synechococcus sp. (strain ATCC 27144 / PCC 6301 / SAUG 1402/1) (Anacystis nidulans) protein is Glutamate 5-kinase.